The sequence spans 120 residues: NAD(P)H-quinone oxidoreductase subunit 3 (120 aa).

Helical transmembrane passes span 10-30 (FLGFLLIAAAVPVLALVTNLI), 64-84 (MFALVFVIFDVETVFLYPWAV), and 89-109 (LGLLAFIEALIFIAILVIALA).

This sequence belongs to the complex I subunit 3 family. In terms of assembly, NDH-1 can be composed of about 15 different subunits; different subcomplexes with different compositions have been identified which probably have different functions.

It localises to the cellular thylakoid membrane. The enzyme catalyses a plastoquinone + NADH + (n+1) H(+)(in) = a plastoquinol + NAD(+) + n H(+)(out). It carries out the reaction a plastoquinone + NADPH + (n+1) H(+)(in) = a plastoquinol + NADP(+) + n H(+)(out). Functionally, NDH-1 shuttles electrons from an unknown electron donor, via FMN and iron-sulfur (Fe-S) centers, to quinones in the respiratory and/or the photosynthetic chain. The immediate electron acceptor for the enzyme in this species is believed to be plastoquinone. Couples the redox reaction to proton translocation, and thus conserves the redox energy in a proton gradient. Cyanobacterial NDH-1 also plays a role in inorganic carbon-concentration. The sequence is that of NAD(P)H-quinone oxidoreductase subunit 3 from Prochlorococcus marinus (strain MIT 9301).